The sequence spans 1050 residues: NAD-specific glutamate dehydrogenase (1050 aa).

The tract at residues 1–39 (MDSPSAPVPAHKLVDRLKDQTPRHPSPQPTHVSYPKVNG) is disordered. The segment covering 12-22 (KLVDRLKDQTP) has biased composition (basic and acidic residues). Residue Lys-594 is part of the active site.

It belongs to the Glu/Leu/Phe/Val dehydrogenases family. Homotetramer.

It carries out the reaction L-glutamate + NAD(+) + H2O = 2-oxoglutarate + NH4(+) + NADH + H(+). The sequence is that of NAD-specific glutamate dehydrogenase (gdh-1) from Neurospora crassa (strain ATCC 24698 / 74-OR23-1A / CBS 708.71 / DSM 1257 / FGSC 987).